We begin with the raw amino-acid sequence, 730 residues long: MGDSKCPYRDANVAGGGTHNKDWWPETLKLDALRQHTAESNPLGKDFDYASAFKTLDYEGLKKDLKDLMTDSQDWWPADFGHYGGFFVRMAWHSAGTYRSIDGRGGGGQGQHRFAPLNSWPDNGNLDKARRLLWPIKQKYGNKISWADLYLLTGNVAIESMGGKTFGFACGRPDTWEADDATFWGNETKWLGNDARYKNGSKDPKDIYTRQLEKPLSAVHMGLIYVNPEGPDGIPDPVASARDIRTTFRRMAMNDEETVALIAGGHTFGKTHGAAPATHLGKEPEGAPIEAQGLGWANSYRSGKGPDTITSGLEVIWTKTPINWSNHYLEYLFKYDWELTKSPGGANQWTAKNAEAFIPDAFDPNKKHPPRMLTTDLALRHDKEYEKISLRFLENPDQFADAFARAWFKLLHRDMGPRSRWLGPEIPKEELIWEDPIPEIDHPIISQEDINNLKKEILSSGVGHNKLIQTAWASASTFRGGDKRGGANGARIRLAPQKDWKVNNPPQLTCVLETLGKIQSSFNSSQTGGKIVSLADLIILAGCAALEKAAGVPVPFSPGRADASQEQTDIKSFSNLEPVADGFRNFGRSTPRARAEHMLVDRAQLLTLTPPELTALVGGLRVLDTNFDGSSCGVFTKRPGQLTNDFFVNLLDPAISWKGIDEDEFFEGIDRKTDEKKWIGSRADLVFGSQAELRAIAEVYGSADGNEKLIKDFIAAWNKVMNLDLFNLAH.

A cross-link (tryptophyl-tyrosyl-methioninium (Trp-Tyr) (with M-251)) is located at residues 92 to 225 (WHSAGTYRSI…LSAVHMGLIY (134 aa)). H93 (proton acceptor) is an active-site residue. The tryptophyl-tyrosyl-methioninium (Tyr-Met) (with W-92) cross-link spans 225-251 (YVNPEGPDGIPDPVASARDIRTTFRRM). H266 lines the heme b pocket.

It belongs to the peroxidase family. Peroxidase/catalase subfamily. In terms of assembly, homodimer or homotetramer. Heme b serves as cofactor. Formation of the three residue Trp-Tyr-Met cross-link is important for the catalase, but not the peroxidase activity of the enzyme.

The protein resides in the cytoplasm. It carries out the reaction H2O2 + AH2 = A + 2 H2O. The catalysed reaction is 2 H2O2 = O2 + 2 H2O. Functionally, bifunctional enzyme with both catalase and broad-spectrum peroxidase activity. This Blumeria hordei (Barley powdery mildew) protein is Catalase-peroxidase.